Reading from the N-terminus, the 285-residue chain is 4-diphosphocytidyl-2-C-methyl-D-erythritol kinase (285 aa).

Residue Lys11 is part of the active site. Residue Pro93–Ala103 coordinates ATP. The active site involves Asp135.

It belongs to the GHMP kinase family. IspE subfamily.

The enzyme catalyses 4-CDP-2-C-methyl-D-erythritol + ATP = 4-CDP-2-C-methyl-D-erythritol 2-phosphate + ADP + H(+). The protein operates within isoprenoid biosynthesis; isopentenyl diphosphate biosynthesis via DXP pathway; isopentenyl diphosphate from 1-deoxy-D-xylulose 5-phosphate: step 3/6. In terms of biological role, catalyzes the phosphorylation of the position 2 hydroxy group of 4-diphosphocytidyl-2C-methyl-D-erythritol. The protein is 4-diphosphocytidyl-2-C-methyl-D-erythritol kinase of Moorella thermoacetica (strain ATCC 39073 / JCM 9320).